Here is a 146-residue protein sequence, read N- to C-terminus: Hemoglobin subunit beta (146 aa).

An N-acetylvaline modification is found at valine 1. A Globin domain is found at 2–146 (HMTDAEKKLV…VANALAHKYH (145 aa)). Threonine 12 bears the Phosphothreonine mark. N6-acetyllysine is present on lysine 59. Position 63 (histidine 63) interacts with heme b. An N6-acetyllysine modification is found at lysine 82. Histidine 92 is a binding site for heme b. S-nitrosocysteine is present on cysteine 93. N6-acetyllysine is present on lysine 144.

This sequence belongs to the globin family. As to quaternary structure, tetramer of two alpha and two different beta chains. Two external cysteine residues at beta-16 and beta-52 cause reversible polymerization to octamers and most likely irreversible formation of higher polymers. As to expression, red blood cells.

Involved in oxygen transport from the lung to the various peripheral tissues. In Echinops telfairi (Lesser hedgehog tenrec), this protein is Hemoglobin subunit beta (HBB).